The sequence spans 227 residues: Cytochrome c oxidase subunit 2 (227 aa).

Topologically, residues 1 to 14 (MAHPVQLGLQDATS) are mitochondrial intermembrane. A helical transmembrane segment spans residues 15-45 (PVMEELVTFHDHALMAMFLISFLILYALSAT). Residues 46-59 (LTTKLTNTNITDAQ) lie on the Mitochondrial matrix side of the membrane. The helical transmembrane segment at 60-87 (EMETIWTILPAVILVLIALPSLRILYMT) threads the bilayer. At 88–227 (DEINNPSFTI…IFEMGPVFTL (140 aa)) the chain is on the mitochondrial intermembrane side. Histidine 161, cysteine 196, glutamate 198, cysteine 200, histidine 204, and methionine 207 together coordinate Cu cation. Mg(2+) is bound at residue glutamate 198.

Belongs to the cytochrome c oxidase subunit 2 family. As to quaternary structure, component of the cytochrome c oxidase (complex IV, CIV), a multisubunit enzyme composed of 14 subunits. The complex is composed of a catalytic core of 3 subunits MT-CO1, MT-CO2 and MT-CO3, encoded in the mitochondrial DNA, and 11 supernumerary subunits COX4I, COX5A, COX5B, COX6A, COX6B, COX6C, COX7A, COX7B, COX7C, COX8 and NDUFA4, which are encoded in the nuclear genome. The complex exists as a monomer or a dimer and forms supercomplexes (SCs) in the inner mitochondrial membrane with NADH-ubiquinone oxidoreductase (complex I, CI) and ubiquinol-cytochrome c oxidoreductase (cytochrome b-c1 complex, complex III, CIII), resulting in different assemblies (supercomplex SCI(1)III(2)IV(1) and megacomplex MCI(2)III(2)IV(2)). Found in a complex with TMEM177, COA6, COX18, COX20, SCO1 and SCO2. Interacts with TMEM177 in a COX20-dependent manner. Interacts with COX20. Interacts with COX16. Cu cation is required as a cofactor.

It localises to the mitochondrion inner membrane. It catalyses the reaction 4 Fe(II)-[cytochrome c] + O2 + 8 H(+)(in) = 4 Fe(III)-[cytochrome c] + 2 H2O + 4 H(+)(out). Functionally, component of the cytochrome c oxidase, the last enzyme in the mitochondrial electron transport chain which drives oxidative phosphorylation. The respiratory chain contains 3 multisubunit complexes succinate dehydrogenase (complex II, CII), ubiquinol-cytochrome c oxidoreductase (cytochrome b-c1 complex, complex III, CIII) and cytochrome c oxidase (complex IV, CIV), that cooperate to transfer electrons derived from NADH and succinate to molecular oxygen, creating an electrochemical gradient over the inner membrane that drives transmembrane transport and the ATP synthase. Cytochrome c oxidase is the component of the respiratory chain that catalyzes the reduction of oxygen to water. Electrons originating from reduced cytochrome c in the intermembrane space (IMS) are transferred via the dinuclear copper A center (CU(A)) of subunit 2 and heme A of subunit 1 to the active site in subunit 1, a binuclear center (BNC) formed by heme A3 and copper B (CU(B)). The BNC reduces molecular oxygen to 2 water molecules using 4 electrons from cytochrome c in the IMS and 4 protons from the mitochondrial matrix. In Theropithecus gelada (Gelada baboon), this protein is Cytochrome c oxidase subunit 2 (MT-CO2).